Here is a 269-residue protein sequence, read N- to C-terminus: Phosphonoacetaldehyde hydrolase (269 aa).

The active-site Nucleophile is the D9. Mg(2+) is bound by residues D9 and A11. K50 serves as the catalytic Schiff-base intermediate with substrate. D184 is a Mg(2+) binding site.

This sequence belongs to the HAD-like hydrolase superfamily. PhnX family. As to quaternary structure, homodimer. Requires Mg(2+) as cofactor.

It catalyses the reaction phosphonoacetaldehyde + H2O = acetaldehyde + phosphate + H(+). In terms of biological role, involved in phosphonate degradation. This is Phosphonoacetaldehyde hydrolase from Lysinibacillus sphaericus (strain C3-41).